The sequence spans 346 residues: Large ribosomal subunit protein uL1c (346 aa).

The N-terminal 70 residues, 1–70 (MAACATHSSL…RASNHKFIVS (70 aa)), are a transit peptide targeting the chloroplast. Phosphotyrosine is present on tyrosine 129. Phosphothreonine is present on threonine 177. Serine 197 carries the post-translational modification Phosphoserine.

This sequence belongs to the universal ribosomal protein uL1 family. In terms of assembly, part of the 50S ribosomal subunit.

It localises to the plastid. The protein localises to the chloroplast. Functionally, this protein binds directly to 23S ribosomal RNA. The chain is Large ribosomal subunit protein uL1c (RPL1) from Arabidopsis thaliana (Mouse-ear cress).